Here is a 457-residue protein sequence, read N- to C-terminus: Phosphatidate cytidylyltransferase (457 aa).

6 helical membrane-spanning segments follow: residues 71–91 (VMIS…IVLI), 154–174 (FIVT…FVLF), 188–208 (GSLC…HLII), 214–234 (GLFW…FAYL), 255–275 (GFLG…RILS), and 330–350 (FHAL…GFFA).

It belongs to the CDS family. As to quaternary structure, homodimer. Mg(2+) is required as a cofactor.

It is found in the endoplasmic reticulum membrane. It localises to the cytoplasmic vesicle. Its subcellular location is the secretory vesicle. The catalysed reaction is a 1,2-diacyl-sn-glycero-3-phosphate + CTP + H(+) = a CDP-1,2-diacyl-sn-glycerol + diphosphate. It participates in phospholipid metabolism; CDP-diacylglycerol biosynthesis; CDP-diacylglycerol from sn-glycerol 3-phosphate: step 3/3. Functionally, supplies CDP-diacylglycerol, which may play an important role as both a precursor to phosphoinositide biosynthesis in the plasma membrane and as a negative effector of phosphatidylinositol 4-kinase activity, thereby exerting an effect on cell proliferation via a lipid-dependent signal transduction cascade. This Saccharomyces cerevisiae (strain ATCC 204508 / S288c) (Baker's yeast) protein is Phosphatidate cytidylyltransferase (CDS1).